The following is a 247-amino-acid chain: MSSSLFSYVVLLIFLFTIPYIQSQPTAPAPTTEKSPINLTAILEAGHQFTTLIQLLNTTQVGFQVSVQLNSSDQGMTIFAPTDNAFNKLKPGTLNSLTYQQQIQLMLYHIIPKYYSLSDLLLASNPVRTQATGQDGGVFGLNFTGQAQSNQVNVSTGVVETRINNALRQQFPLAVYVVDSVLLPEELFGTKTTPTGAPAPKSSTSSSDADSPAADDEHKSAGSSVKRTSLGIVVSFALFCCSVIYIA.

An N-terminal signal peptide occupies residues 1-23 (MSSSLFSYVVLLIFLFTIPYIQS). In terms of domain architecture, FAS1 spans 36 to 182 (PINLTAILEA…LAVYVVDSVL (147 aa)). 5 N-linked (GlcNAc...) asparagine glycosylation sites follow: N38, N57, N70, N142, and N153. The segment covering 192–212 (TTPTGAPAPKSSTSSSDADSP) has biased composition (low complexity). A disordered region spans residues 192–221 (TTPTGAPAPKSSTSSSDADSPAADDEHKSA). G222 is lipidated: GPI-anchor amidated glycine. The propeptide at 223–247 (SSVKRTSLGIVVSFALFCCSVIYIA) is removed in mature form.

The protein belongs to the fasciclin-like AGP family.

Its subcellular location is the cell membrane. Functionally, may be a cell surface adhesion protein. This chain is Fasciclin-like arabinogalactan protein 6 (FLA6), found in Arabidopsis thaliana (Mouse-ear cress).